The primary structure comprises 144 residues: Transcription antitermination protein NusB (144 aa).

The protein belongs to the NusB family.

In terms of biological role, involved in transcription antitermination. Required for transcription of ribosomal RNA (rRNA) genes. Binds specifically to the boxA antiterminator sequence of the ribosomal RNA (rrn) operons. The protein is Transcription antitermination protein NusB of Streptococcus thermophilus (strain CNRZ 1066).